A 416-amino-acid chain; its full sequence is Tyrosine--tRNA ligase (416 aa).

Tyrosine 39 is an L-tyrosine binding site. Residues 44-53 (CTASSLHVGS) carry the 'HIGH' region motif. Tyrosine 176 and glutamine 180 together coordinate L-tyrosine. The short motif at 236 to 240 (KMGKT) is the 'KMSKS' region element. ATP is bound at residue lysine 239. The region spanning 349-415 (ISLIDLLHDI…GKKRHIKVMV (67 aa)) is the S4 RNA-binding domain.

The protein belongs to the class-I aminoacyl-tRNA synthetase family. TyrS type 1 subfamily. In terms of assembly, homodimer.

Its subcellular location is the cytoplasm. It catalyses the reaction tRNA(Tyr) + L-tyrosine + ATP = L-tyrosyl-tRNA(Tyr) + AMP + diphosphate + H(+). Its function is as follows. Catalyzes the attachment of tyrosine to tRNA(Tyr) in a two-step reaction: tyrosine is first activated by ATP to form Tyr-AMP and then transferred to the acceptor end of tRNA(Tyr). The polypeptide is Tyrosine--tRNA ligase (Wolbachia sp. subsp. Brugia malayi (strain TRS)).